The following is a 256-amino-acid chain: Follistatin-related protein 3 (256 aa).

Residues 1-23 (MRPGALWPLLWGALVWAVGSVGA) form the signal peptide. The TB domain maps to 34–105 (GVCWLQQGKE…SCDGVECGPG (72 aa)). Intrachain disulfides connect Cys36-Cys59, Cys46-Cys90, Cys60-Cys93, Cys97-Cys108, Cys102-Cys117, Cys119-Cys151, Cys123-Cys144, and Cys133-Cys165. Residue Asn71 is glycosylated (N-linked (GlcNAc...) asparagine). One can recognise a Follistatin-like 1 domain in the interval 97–117 (CDGVECGPGKACRMLGGRPHC). 2 Kazal-like domains span residues 111–167 (LGGR…RCQK) and 187–243 (SAHC…ICTG). In terms of domain architecture, Follistatin-like 2 spans 168–191 (SCAQVVCPRPQSCLVDQTGSAHCV). Intrachain disulfides connect Cys193/Cys227, Cys198/Cys220, and Cys209/Cys241. Asn213 is a glycosylation site (N-linked (GlcNAc...) asparagine).

As to quaternary structure, interacts with INHBA and INHBB. Interacts with FN1. Interacts with ADAM12. Interacts with MLLT10; the interaction enhances MLLT10 in vitro transcriptional activity and self-association. Interacts with MSTN.

Its subcellular location is the secreted. It is found in the nucleus. Functionally, the secreted form is a binding and antagonizing protein for members of the TGF-beta family, such as activin, BMP2 and MSTN. Inhibits activin A-, activin B-, BMP2- and MSDT-induced cellular signaling; more effective on activin A than on activin B. Involved in bone formation; inhibits osteoclast differentiation. Involved in hematopoiesis; involved in differentiation of hemopoietic progenitor cells, increases hematopoietic cell adhesion to fibronectin and seems to contribute to the adhesion of hematopoietic precursor cells to the bone marrow stroma. The nuclear form is probably involved in transcriptional regulation via interaction with MLLT10. The polypeptide is Follistatin-related protein 3 (Fstl3) (Rattus norvegicus (Rat)).